Consider the following 2742-residue polypeptide: Neurobeachin-like protein 2 (2742 aa).

Disordered stretches follow at residues 1312-1333 (ALSP…PSES) and 1356-1434 (LERA…QQTP). Residues 1384–1394 (TPSPLDGPRPF) show a composition bias toward pro residues. Positions 1421 to 1433 (GDDTSNTSNPQQT) are enriched in polar residues. Phosphothreonine is present on T1855. Residues 1903 to 2028 (EKREKLVLSA…LRNQVYSLLL (126 aa)) enclose the BEACH-type PH domain. Positions 2041 to 2333 (RSPLEMLRAS…QLLKEPHPPR (293 aa)) constitute a BEACH domain. WD repeat units follow at residues 2374–2412 (LVLA…TWLP), 2436–2479 (KLLS…SLPR), 2482–2519 (LLNQ…VWRL), 2532–2570 (KPVQ…IHTV), 2577–2619 (AALR…TYSL), 2627–2662 (RLRA…ILHL), and 2670–2705 (PPLP…VGAG). A phosphoserine mark is found at S2727 and S2730.

This sequence belongs to the WD repeat neurobeachin family.

It localises to the endoplasmic reticulum. Its function is as follows. Probably involved in thrombopoiesis. Plays a role in the development or secretion of alpha-granules, that contain several growth factors important for platelet biogenesis. This Mus musculus (Mouse) protein is Neurobeachin-like protein 2 (Nbeal2).